The primary structure comprises 49 residues: Putative metallothionein MT1DP (49 aa).

A beta region spans residues methionine 1 to cysteine 29. Positions 5, 7, 13, 15, 19, 21, 26, 29, 33, 34, 36, 37, 41, 44, and 48 each coordinate a divalent metal cation. Residues lysine 30–threonine 49 are alpha.

The protein belongs to the metallothionein superfamily. Type 1 family.

In terms of biological role, metallothioneins have a high content of cysteine residues that bind various heavy metals. The protein is Putative metallothionein MT1DP (MT1DP) of Homo sapiens (Human).